The chain runs to 38 residues: Photosystem I reaction center subunit IX (38 aa).

The helical transmembrane segment at 6–26 threads the bilayer; that stretch reads YLSTAPVVATLWLFLTAGILI.

Belongs to the PsaJ family.

The protein resides in the plastid. It is found in the chloroplast thylakoid membrane. In terms of biological role, may help in the organization of the PsaE and PsaF subunits. This chain is Photosystem I reaction center subunit IX, found in Cyanidioschyzon merolae (strain NIES-3377 / 10D) (Unicellular red alga).